The sequence spans 306 residues: Serine/threonine-protein phosphatase 2A catalytic subunit A (306 aa).

Mn(2+) is bound by residues Asp-54, His-56, Asp-82, and Asn-114. Residue His-115 is the Proton donor of the active site. Residues His-164 and His-238 each coordinate Mn(2+). Leu-306 bears the Leucine methyl ester mark.

It belongs to the PPP phosphatase family. PP-2A subfamily. PP2A consists of a trimeric holoenzyme, composed of a 37 kDa catalytic subunit (C subunit) and a 65 kDa constant regulatory subunit (A subunit), that associates with a variety of regulatory subunits (B subunit) such as phr2AB (B55) and psrA (B56 homolog). The trimer may partially dissociates into a core 'AC' dimer equally active compared to the trimer. The cofactor is Mn(2+). Reversibly methyl esterified on Leu-306 by leucine carboxyl methyltransferase 1 (LCMT) and protein phosphatase methylesterase 1 (PPME1). Carboxyl methylation influences the affinity of the catalytic subunit for the different regulatory subunits, thereby modulating the PP2A holoenzyme's substrate specificity, enzyme activity and cellular localization.

The protein localises to the cytoplasm. It is found in the cytosol. The protein resides in the nucleus speckle. It carries out the reaction O-phospho-L-seryl-[protein] + H2O = L-seryl-[protein] + phosphate. The catalysed reaction is O-phospho-L-threonyl-[protein] + H2O = L-threonyl-[protein] + phosphate. Plays a role in activating the myosin contractile function. Dephosphorylates threonine at 'Thr-1823', 'Thr-1833' and 'Thr-2029' in the C-terminal tail region of myosin II heavy chain (mhcA). Drives the assembly of dephosphorylated myosin II filaments to allow myosin recruitment into the cytoskeleton. This chain is Serine/threonine-protein phosphatase 2A catalytic subunit A (pho2a), found in Dictyostelium discoideum (Social amoeba).